We begin with the raw amino-acid sequence, 394 residues long: Acetate kinase 1 (394 aa).

Asn8 provides a ligand contact to Mg(2+). An ATP-binding site is contributed by Lys15. Residue Arg90 coordinates substrate. Asp147 functions as the Proton donor/acceptor in the catalytic mechanism. ATP is bound by residues 207–211 (HLGSG) and 282–284 (DMR). Glu382 contributes to the Mg(2+) binding site.

This sequence belongs to the acetokinase family. In terms of assembly, homodimer. It depends on Mg(2+) as a cofactor. Mn(2+) is required as a cofactor.

Its subcellular location is the cytoplasm. It carries out the reaction acetate + ATP = acetyl phosphate + ADP. Its pathway is metabolic intermediate biosynthesis; acetyl-CoA biosynthesis; acetyl-CoA from acetate: step 1/2. Catalyzes the formation of acetyl phosphate from acetate and ATP. Can also catalyze the reverse reaction. This Latilactobacillus sakei subsp. sakei (strain 23K) (Lactobacillus sakei subsp. sakei) protein is Acetate kinase 1.